A 517-amino-acid polypeptide reads, in one-letter code: AAA ATPase forming ring-shaped complexes (517 aa).

The stretch at 25–53 forms a coiled coil; it reads ARNAKLVELLQASRTKLEEINGRLEALAE. An ATP-binding site is contributed by 233 to 238; the sequence is GNGKTL.

This sequence belongs to the AAA ATPase family. As to quaternary structure, homohexamer. Assembles into a hexameric ring structure.

In Corynebacterium jeikeium (strain K411), this protein is AAA ATPase forming ring-shaped complexes.